The primary structure comprises 528 residues: UDP-glucuronosyltransferase 2B10 (528 aa).

Residues M1–G23 form the signal peptide. N-linked (GlcNAc...) asparagine glycosylation occurs at N66. N6-succinyllysine is present on K134. N-linked (GlcNAc...) asparagine glycosylation is found at N314 and N481. The chain crosses the membrane as a helical span at residues V492–L512.

The protein belongs to the UDP-glycosyltransferase family.

The protein resides in the microsome membrane. Its subcellular location is the endoplasmic reticulum membrane. The enzyme catalyses glucuronate acceptor + UDP-alpha-D-glucuronate = acceptor beta-D-glucuronoside + UDP + H(+). In terms of biological role, UDPGT is of major importance in the conjugation and subsequent elimination of potentially toxic xenobiotics and endogenous compounds. This Homo sapiens (Human) protein is UDP-glucuronosyltransferase 2B10 (UGT2B10).